The chain runs to 562 residues: Glucocorticoid modulatory element-binding protein 1 (562 aa).

An N-acetylalanine modification is found at A2. The region spanning 72–156 (ASSIEGNEDM…RKMMDSGQID (85 aa)) is the SAND domain. Residue C103 participates in Zn(2+) binding. K129, K133, K136, and R147 together coordinate DNA. Positions 160, 164, and 168 each coordinate Zn(2+). Positions 311–355 (LDNRRKQVEQGEEQFLYTLADLERQLEEQKKQAQDPRLKSQTVQN) form a coiled coil. The tract at residues 360 to 384 (PVSTPKPPKRPRLQRPASTTVLSPS) is disordered. Residues 375 to 384 (PASTTVLSPS) are compositionally biased toward polar residues.

In terms of assembly, homodimer, and heterodimer of GMEB1 and GMEB2. Interacts with TRIM63. Interacts with the glucocorticoid receptor (NR3C1) and NCOA2/TIF2. May interact with HSP27 and CREB-binding protein (CBP). As to expression, ubiquitous. Low levels were detected in heart, brain, spleen, lung, liver, skeletal muscle, kidney and testis.

It is found in the nucleus. The protein resides in the cytoplasm. Trans-acting factor that binds to glucocorticoid modulatory elements (GME) present in the TAT (tyrosine aminotransferase) promoter and increases sensitivity to low concentrations of glucocorticoids. Also binds to the transferrin receptor promoter. This chain is Glucocorticoid modulatory element-binding protein 1 (Gmeb1), found in Mus musculus (Mouse).